The primary structure comprises 675 residues: MAQVAKKILVTCALPYANGSIHLGHMLEHIQADIWVRFQRMRGNQVHFICADDAHGTPIMLKAQQMGIEPEQMIAEMSQEHQQDFAGFAISYDNYHSTHSDENRELSSLIYGRLKANGYIKNRTISQLYDPEKGMFLPDRFVKGTCPKCKAPEQYGDNCEVCGATYSPTELIDPKSAVSGATPVMRESEHFFFDLPAFSDMLQAWTRSGALQEQVANKMQEWFDSGLQQWDITRDAPYFGFEVPDAPGKYFYVWLDAPIGYMGAFKNLCDKRGDLDFDEFWGKDAKTDLYHFIGKDIVYFHSLFWPAMLEGSNFRKPTNLFVHGYVTVNGAKMSKSRGTFIKAGTYLKYLDADCLRYYYAAKLSSRIDDIDLNLEDFVQRVNADIVNKVVNLASRNAGFINKRFAGQLADQLADPVLYKTFTDAATSIADAYNNRESGKAIREIMALADVANRYVDEQAPWVVAKQEGHDADLHAICSMGINLFRVLMTYLKPVLPSLTERTEAFLNTELTWDSIEQPLLGHSITAFKALFNRIDLDKVNEMVASSKEDMAPATRVTGPLADDPIQETISFDDFAKVDMRIALIQQAEFVEGSDKLLKLTLELGGETRQIFSGIRSAYPDPKALEGRMTVMVANLAPRKMRFGVSEGMVMTAGPGGSDIFLLSPDSGAQPGMQVK.

The short motif at 15–25 (PYANGSIHLGH) is the 'HIGH' region element. Zn(2+) contacts are provided by C146, C149, C159, and C162. The short motif at 332-336 (KMSKS) is the 'KMSKS' region element. K335 contacts ATP. The region spanning 573–675 (DFAKVDMRIA…SGAQPGMQVK (103 aa)) is the tRNA-binding domain.

This sequence belongs to the class-I aminoacyl-tRNA synthetase family. MetG type 1 subfamily. In terms of assembly, homodimer. Requires Zn(2+) as cofactor.

It is found in the cytoplasm. The enzyme catalyses tRNA(Met) + L-methionine + ATP = L-methionyl-tRNA(Met) + AMP + diphosphate. Its function is as follows. Is required not only for elongation of protein synthesis but also for the initiation of all mRNA translation through initiator tRNA(fMet) aminoacylation. This chain is Methionine--tRNA ligase, found in Yersinia pseudotuberculosis serotype I (strain IP32953).